A 104-amino-acid chain; its full sequence is NADH dehydrogenase [ubiquinone] flavoprotein 3, mitochondrial (104 aa).

The N-terminal 35 residues, 1–35 (MAVSLLLRGGRIRALKAVLLEARVFPGELVSVVRL), are a transit peptide targeting the mitochondrion. A compositionally biased stretch (basic and acidic residues) spans 38 to 50 (ESEKSAKEKELHP). The tract at residues 38 to 68 (ESEKSAKEKELHPKTQSVLKEPEPTDTTTYK) is disordered. Ser-101 carries the phosphoserine modification.

It belongs to the complex I NDUFV3 subunit family. In terms of assembly, complex I is composed of 45 different subunits. This is a component of the flavoprotein-sulfur (FP) fragment of the enzyme.

It localises to the mitochondrion inner membrane. Its function is as follows. Accessory subunit of the mitochondrial membrane respiratory chain NADH dehydrogenase (Complex I), that is believed not to be involved in catalysis. Complex I functions in the transfer of electrons from NADH to the respiratory chain. The immediate electron acceptor for the enzyme is believed to be ubiquinone. May be the terminally assembled subunit of Complex I. This chain is NADH dehydrogenase [ubiquinone] flavoprotein 3, mitochondrial (Ndufv3), found in Mus musculus (Mouse).